A 283-amino-acid chain; its full sequence is Acetylglutamate kinase (283 aa).

Substrate contacts are provided by residues Gly-64–Gly-65, Arg-86, and Asn-178.

It belongs to the acetylglutamate kinase family. ArgB subfamily.

The protein localises to the cytoplasm. It carries out the reaction N-acetyl-L-glutamate + ATP = N-acetyl-L-glutamyl 5-phosphate + ADP. Its pathway is amino-acid biosynthesis; L-arginine biosynthesis; N(2)-acetyl-L-ornithine from L-glutamate: step 2/4. Its function is as follows. Catalyzes the ATP-dependent phosphorylation of N-acetyl-L-glutamate. The chain is Acetylglutamate kinase from Lactococcus lactis subsp. lactis (strain IL1403) (Streptococcus lactis).